The sequence spans 204 residues: Pyridoxamine 5'-phosphate oxidase YLR456W homolog (204 aa).

FMN contacts are provided by residues phenylalanine 65–threonine 66 and asparagine 127.

Belongs to the pyridoxamine 5'-phosphate oxidase family. The cofactor is FMN.

Its subcellular location is the cytoplasm. The protein localises to the nucleus. The protein is Pyridoxamine 5'-phosphate oxidase YLR456W homolog of Saccharomyces cerevisiae (strain ATCC 204508 / S288c) (Baker's yeast).